Consider the following 504-residue polypeptide: Splicing factor SF3a60 homolog (504 aa).

Serine 2 carries the post-translational modification N-acetylserine. 2 disordered regions span residues 293 to 319 (DKKH…SENA) and 355 to 374 (YEEM…LESD). Residues 356 to 374 (EEMEGEREGEEANTELESD) are compositionally biased toward acidic residues. Serine 373 carries the phosphoserine modification. The segment at 409-440 (FKCEICGNYSYWGRRAFERHFKEWRHQHGMRC) adopts a Matrin-type zinc-finger fold.

Belongs to the SF3A3 family. In terms of tissue distribution, expressed at moderate levels in all sporophytic tissues with strongest expression in gametophytes.

Its subcellular location is the nucleus. In terms of biological role, splicing factor homolog to SF3a60 that may be involved in pre-spliceosome formation. Is necessary for gametic cell fate determination. The sequence is that of Splicing factor SF3a60 homolog from Arabidopsis thaliana (Mouse-ear cress).